A 319-amino-acid chain; its full sequence is Acetyl-coenzyme A carboxylase carboxyl transferase subunit alpha (319 aa).

The 262-residue stretch at 35–296 (NIDEEVHRLR…KAQLLEDLAD (262 aa)) folds into the CoA carboxyltransferase C-terminal domain.

The protein belongs to the AccA family. Acetyl-CoA carboxylase is a heterohexamer composed of biotin carboxyl carrier protein (AccB), biotin carboxylase (AccC) and two subunits each of ACCase subunit alpha (AccA) and ACCase subunit beta (AccD).

It localises to the cytoplasm. It catalyses the reaction N(6)-carboxybiotinyl-L-lysyl-[protein] + acetyl-CoA = N(6)-biotinyl-L-lysyl-[protein] + malonyl-CoA. Its pathway is lipid metabolism; malonyl-CoA biosynthesis; malonyl-CoA from acetyl-CoA: step 1/1. Its function is as follows. Component of the acetyl coenzyme A carboxylase (ACC) complex. First, biotin carboxylase catalyzes the carboxylation of biotin on its carrier protein (BCCP) and then the CO(2) group is transferred by the carboxyltransferase to acetyl-CoA to form malonyl-CoA. This chain is Acetyl-coenzyme A carboxylase carboxyl transferase subunit alpha, found in Salmonella dublin (strain CT_02021853).